Reading from the N-terminus, the 122-residue chain is Large ribosomal subunit protein uL14 (122 aa).

It belongs to the universal ribosomal protein uL14 family. In terms of assembly, part of the 50S ribosomal subunit. Forms a cluster with proteins L3 and L19. In the 70S ribosome, L14 and L19 interact and together make contacts with the 16S rRNA in bridges B5 and B8.

Binds to 23S rRNA. Forms part of two intersubunit bridges in the 70S ribosome. The polypeptide is Large ribosomal subunit protein uL14 (Desulfitobacterium hafniense (strain DSM 10664 / DCB-2)).